A 148-amino-acid polypeptide reads, in one-letter code: 3-dehydroquinate dehydratase (148 aa).

Catalysis depends on Tyr-24, which acts as the Proton acceptor. Substrate contacts are provided by Asn-75, His-81, and Asp-88. His-101 acts as the Proton donor in catalysis. Substrate-binding positions include 102-103 (LS) and Arg-112.

It belongs to the type-II 3-dehydroquinase family. Homododecamer.

It catalyses the reaction 3-dehydroquinate = 3-dehydroshikimate + H2O. It functions in the pathway metabolic intermediate biosynthesis; chorismate biosynthesis; chorismate from D-erythrose 4-phosphate and phosphoenolpyruvate: step 3/7. In terms of biological role, catalyzes a trans-dehydration via an enolate intermediate. This is 3-dehydroquinate dehydratase from Sinorhizobium medicae (strain WSM419) (Ensifer medicae).